We begin with the raw amino-acid sequence, 65 residues long: Conotoxin tx3c (65 aa).

Positions Met1–Ala19 are cleaved as a signal peptide. Residues Val20–Ala50 constitute a propeptide that is removed on maturation. 3 disulfides stabilise this stretch: Cys53–Cys64, Cys54–Cys60, and Cys57–Cys63. Pro62 is subject to 4-hydroxyproline; partial. At Cys64 the chain carries Cysteine amide.

Post-translationally, the hydroxylation at Pro-62 is observed in PubMed:15924437, PubMed:19380747 and PubMed:22709442, and the non-hydroxylation is described in PubMed:22709442. Expressed by the venom duct.

It localises to the secreted. Functionally, causes scratching in mice. The chain is Conotoxin tx3c from Conus textile (Cloth-of-gold cone).